The following is a 374-amino-acid chain: Putative L-lysine 2,3-aminomutase aq_1632 (374 aa).

The region spanning 86–314 is the Radical SAM core domain; the sequence is HKYPDTALLL…ARVRYVMSHE (229 aa). [4Fe-4S] cluster is bound by residues Cys-100, Cys-104, and Cys-107. An N6-(pyridoxal phosphate)lysine modification is found at Lys-317.

The protein belongs to the radical SAM superfamily. KamA family. [4Fe-4S] cluster is required as a cofactor. It depends on pyridoxal 5'-phosphate as a cofactor.

The chain is Putative L-lysine 2,3-aminomutase aq_1632 from Aquifex aeolicus (strain VF5).